The sequence spans 110 residues: Insulin (110 aa).

The N-terminal stretch at 1–24 (MALWMRLLPLLAFLILWEPSPAHA) is a signal peptide. 3 cysteine pairs are disulfide-bonded: Cys-31-Cys-96, Cys-43-Cys-109, and Cys-95-Cys-100. Positions 57 to 87 (GVDDPQMPQLELGGSPGAGDLRALALEVARQ) are cleaved as a propeptide — c peptide.

The protein belongs to the insulin family. Heterodimer of a B chain and an A chain linked by two disulfide bonds.

The protein localises to the secreted. Functionally, insulin decreases blood glucose concentration. It increases cell permeability to monosaccharides, amino acids and fatty acids. It accelerates glycolysis, the pentose phosphate cycle, and glycogen synthesis in liver. The protein is Insulin (INS) of Psammomys obesus (Fat sand rat).